The sequence spans 231 residues: Large ribosomal subunit protein uL1 (231 aa).

The protein belongs to the universal ribosomal protein uL1 family. As to quaternary structure, part of the 50S ribosomal subunit.

Its function is as follows. Binds directly to 23S rRNA. The L1 stalk is quite mobile in the ribosome, and is involved in E site tRNA release. Functionally, protein L1 is also a translational repressor protein, it controls the translation of the L11 operon by binding to its mRNA. This Carboxydothermus hydrogenoformans (strain ATCC BAA-161 / DSM 6008 / Z-2901) protein is Large ribosomal subunit protein uL1.